Consider the following 178-residue polypeptide: Ribosome maturation factor RimP (178 aa).

Belongs to the RimP family.

It localises to the cytoplasm. Functionally, required for maturation of 30S ribosomal subunits. The polypeptide is Ribosome maturation factor RimP (Streptococcus pyogenes serotype M3 (strain ATCC BAA-595 / MGAS315)).